The following is a 62-amino-acid chain: uncharacterized protein (62 aa).

This is an uncharacterized protein from Homo sapiens (Human).